We begin with the raw amino-acid sequence, 116 residues long: Urease subunit beta (116 aa).

A disordered region spans residues Ile97 to Pro116.

The protein belongs to the urease beta subunit family. In terms of assembly, heterotrimer of UreA (gamma), UreB (beta) and UreC (alpha) subunits. Three heterotrimers associate to form the active enzyme.

It is found in the cytoplasm. The enzyme catalyses urea + 2 H2O + H(+) = hydrogencarbonate + 2 NH4(+). Its pathway is nitrogen metabolism; urea degradation; CO(2) and NH(3) from urea (urease route): step 1/1. The protein is Urease subunit beta of Paracidovorax citrulli (strain AAC00-1) (Acidovorax citrulli).